Here is a 562-residue protein sequence, read N- to C-terminus: Potassium-transporting ATPase potassium-binding subunit (562 aa).

The next 12 membrane-spanning stretches (helical) occupy residues 5–25, 63–83, 132–152, 175–195, 250–270, 279–299, 327–347, 356–376, 379–399, 416–436, 483–503, and 526–546; these read AFLL…PLGS, AAAI…LLMA, GLTV…FALI, LYVL…QGVL, LSNI…CFAF, QGHA…AVVM, FGVL…TGAV, ALGG…FGGV, GLYG…LMIG, MTAL…ALAL, VLLA…VLAI, and LFIG…FIPA.

The protein belongs to the KdpA family. In terms of assembly, the system is composed of three essential subunits: KdpA, KdpB and KdpC.

The protein resides in the cell inner membrane. Part of the high-affinity ATP-driven potassium transport (or Kdp) system, which catalyzes the hydrolysis of ATP coupled with the electrogenic transport of potassium into the cytoplasm. This subunit binds the periplasmic potassium ions and delivers the ions to the membrane domain of KdpB through an intramembrane tunnel. This Pectobacterium carotovorum subsp. carotovorum (strain PC1) protein is Potassium-transporting ATPase potassium-binding subunit.